The chain runs to 214 residues: Alpha-S1-casein (214 aa).

The N-terminal stretch at 1-15 (MKLLILTCLVAVALA) is a signal peptide. Residues 59–91 (IGSESTEDQAMEDAKQMKAGSSSSSEEIVPNSA) form a disordered region. 9 positions are modified to phosphoserine: Ser61, Ser63, Ser79, Ser80, Ser81, Ser82, Ser83, Ser90, and Ser130.

This sequence belongs to the alpha-casein family. Mammary gland specific. Secreted in milk.

The protein resides in the secreted. Functionally, important role in the capacity of milk to transport calcium phosphate. In Capra hircus (Goat), this protein is Alpha-S1-casein (CSN1S1).